The following is an 87-amino-acid chain: Small ribosomal subunit protein bS20 (87 aa).

Belongs to the bacterial ribosomal protein bS20 family.

Functionally, binds directly to 16S ribosomal RNA. In Clostridium botulinum (strain Eklund 17B / Type B), this protein is Small ribosomal subunit protein bS20.